The chain runs to 222 residues: Ribosomal RNA small subunit methyltransferase G (222 aa).

Residues G85, L90, 108 to 110, 136 to 137, and R150 contribute to the S-adenosyl-L-methionine site; these read DAT and VE.

Belongs to the methyltransferase superfamily. RNA methyltransferase RsmG family.

The protein resides in the cytoplasm. Its function is as follows. Specifically methylates the N7 position of a guanine in 16S rRNA. This chain is Ribosomal RNA small subunit methyltransferase G, found in Chlorobium phaeobacteroides (strain DSM 266 / SMG 266 / 2430).